The primary structure comprises 2181 residues: Genome polyprotein (2181 aa).

A lipid anchor (N-myristoyl glycine; by host) is attached at glycine 80. Interaction with host receptor ANTXR1 regions lie at residues 316-337 (DYRT…PPNW) and 761-772 (RFGLYANPSGSG). Residues 1165–1333 (LGKTNLAQSL…YKKHTRLNFD (169 aa)) enclose the SF3 helicase domain. 1197–1204 (GKPGCGKS) serves as a coordination point for ATP. The interval 1472–1500 (EETESEGSVKAPRSENAYDGPKKNSKPPG) is disordered. Residue tyrosine 1489 is modified to O-(5'-phospho-RNA)-tyrosine. In terms of domain architecture, Peptidase C3 spans 1511 to 1704 (NVDMGFEAAV…AGTYISKLGL (194 aa)). Histidine 1556 serves as the catalytic For protease 3C activity and deubiquitinase activity. Aspartate 1592 acts as the For protease 3C activity in catalysis. The active-site For protease 3C activity and deubiquitinase activity is cysteine 1668. The RdRp catalytic domain occupies 1950 to 2068 (KNTYDVDYSA…GTDYDLDFNE (119 aa)). Active-site for RdRp activity residues include aspartate 1956 and aspartate 2054.

In terms of assembly, interacts with host entry receptor ANTRX1. As to quaternary structure, interacts with host IRF3; this interaction is involved in the suppression of IRF3 and IRF7 expression and phosphorylation by the virus. Interacts with host IRF7; this interaction is involved in the suppression of IRF3 and IRF7 expression and phosphorylation by the virus. Interacts with host MAVS; this interaction allows the cleavage of MAVS and subsequent suppression of host immunity. Interacts with host TRIF; this interaction allows the cleavage of TRIF and subsequent suppression of host immunity. Interacts with host TANK; this interaction allows the cleavage of TANK and subsequent suppression of host immunity. Interacts with host RIGI. Interacts with host TBK1. Interacts with host TRAF3. Specific enzymatic cleavages by the viral protease in vivo yield a variety of precursors and mature proteins. The polyprotein seems to be cotranslationally cleaved at the 2A/2B junction by a ribosomal skip from one codon to the next without formation of a peptide bond. This process would release the P1-2A peptide from the translational complex. In terms of processing, during virion maturation, immature virions are rendered infectious following cleavage of VP0 into VP4 and VP2. This maturation seems to be an autocatalytic event triggered by the presence of RNA in the capsid and is followed by a conformational change of the particle. Post-translationally, myristoylation is required during RNA encapsidation and formation of the mature virus particle. Uridylylated by the polymerase and is covalently linked to the 5'-end of genomic RNA. This uridylylated form acts as a nucleotide-peptide primer for the polymerase.

The protein resides in the virion. Its subcellular location is the host cytoplasm. It localises to the host nucleus. It is found in the host nucleolus. The protein localises to the host cytoplasmic vesicle membrane. The enzyme catalyses RNA(n) + a ribonucleoside 5'-triphosphate = RNA(n+1) + diphosphate. The catalysed reaction is Selective cleavage of Gln-|-Gly bond in the poliovirus polyprotein. In other picornavirus reactions Glu may be substituted for Gln, and Ser or Thr for Gly.. It carries out the reaction Thiol-dependent hydrolysis of ester, thioester, amide, peptide and isopeptide bonds formed by the C-terminal Gly of ubiquitin (a 76-residue protein attached to proteins as an intracellular targeting signal).. It catalyses the reaction ATP + H2O = ADP + phosphate + H(+). In terms of biological role, forms an icosahedral capsid of pseudo T=3 symmetry with capsid proteins VP2 and VP3. Together they form an icosahedral capsid composed of 60 copies of each VP1, VP2, and VP3, with a diameter of approximately 325 Angstroms. VP4 lies on the inner surface of the protein shell formed by VP1, VP2 and VP3. All the three latter proteins contain a beta-sheet structure called beta-barrel jelly roll. VP1 is situated at the 12 fivefold axes, whereas VP2 and VP3 are located at the quasi-sixfold axes. Binds the host receptor ANTXR1 for attachment and uncoating (entry). Functionally, forms an icosahedral capsid of pseudo T=3 symmetry with capsid proteins VP2 and VP3. Together they form an icosahedral capsid composed of 60 copies of each VP1, VP2, and VP3, with a diameter of approximately 270 Angstroms. VP4 lies on the inner surface of the protein shell formed by VP1, VP2 and VP3. All the three latter proteins contain a beta-sheet structure called beta-barrel jelly roll. VP1 is situated at the 12 fivefold axes, whereas VP2 and VP3 are located at the quasi-sixfold axes. Binds the host receptor ANTXR1 for attachment and uncoating (entry). Forms an icosahedral capsid of pseudo T=3 symmetry with capsid proteins VP2 and VP3. Together they form an icosahedral capsid composed of 60 copies of each VP1, VP2, and VP3, with a diameter of approximately 270 Angstroms. VP4 lies on the inner surface of the protein shell formed by VP1, VP2 and VP3. All the three latter proteins contain a beta-sheet structure called beta-barrel jelly roll. VP1 is situated at the 12 fivefold axes, whereas VP2 and VP3 are located at the quasi-sixfold axes. Vp3 also seems to be involved in the binding to host receptor ANTXR1 for attachment and uncoating (entry). Its function is as follows. Lies on the inner surface of the capsid shell. After binding to the host receptor, the capsid undergoes conformational changes. Capsid protein VP4 is released, capsid protein VP1 N-terminus is externalized, and together, they shape a pore in the host membrane through which the viral genome is translocated into the host cell cytoplasm. After genome has been released, the channel shrinks. In terms of biological role, VP0 precursor is a component of immature procapsids. Functionally, mediates self-processing of the polyprotein by a translational effect termed 'ribosome skipping'. Mechanistically, 2A-mediated cleavage occurs between the C-terminal glycine and the proline of the downstream protein 2B. Plays an essential role in the virus replication cycle by acting as a viroporin. Creates a pore in the host endoplasmic reticulum and as a consequence releases Ca2+ in the cytoplasm of infected cell. In turn, high levels of cytoplasmic calcium may trigger membrane trafficking and transport of viral ER-associated proteins to viroplasms, sites of viral genome replication. Its function is as follows. Associates with and induces structural rearrangements of intracellular membranes. In terms of biological role, covalently linked to the 5'-end of both the positive-strand and negative-strand genomic RNAs. Acts as a genome-linked replication primer. Functionally, cysteine protease that generates mature viral proteins from the precursor polyprotein. Inactivates crucial host adapter molecules in order to suppress antiviral type-I interferon (type-I IFN) and NF-kappaB production to escape host antiviral innate immune responses. Deubiquitinase that acts on both lysine-48- and lysine-63-linked polyubiquitin chains and inhibits the ubiquitination of the ATP-dependent RNA helicase RIGI, TANK-binding kinase 1 (TBK1), and TNF receptor-associated factor 3 (TRAF3), thereby blocking the expression of IFN-beta and IFN stimulated gene 54 (ISG54). Induces host IRF3 and IRF7 degradation thereby suppressing IRF3- and IRF7-induced type-I IFN production. Also decreases host IRF3 phosphorylation leading to negligible IRF3 activation. Cleaves host MAVS, TRIF and TANK, which are then unable to regulate pattern recognition receptor (PRR)-mediated type-I IFN production. Inhibits the integrated stress response (ISR) in the infected cell by disrupting eIF4GI-G3BP1 interaction. Stress granule formation is thus inhibited. Replicates the genomic and antigenomic RNAs by recognizing replications specific signals. Performs VPg uridylylation. This is Genome polyprotein from Sus scrofa (Pig).